The chain runs to 1091 residues: Exonuclease/helicase subunit RexB (1091 aa).

This sequence belongs to the helicase family. AddB/RexB type 2 subfamily. In terms of assembly, heterodimer of RexA (AddA) and RexB. The cofactor is Mg(2+).

Functionally, involved in DNA double-strand break repair. Is not involved in recombination during natural competence or in plasmid establishment. The heterodimer acts as both an ATP-dependent DNA helicase and an ATP-dependent, dual-direction single-stranded exonuclease. Recognizes the chi site generating a DNA molecule suitable for the initiation of homologous recombination. This subunit has 5' -&gt; 3' nuclease activity but not helicase activity. This Streptococcus pneumoniae serotype 4 (strain ATCC BAA-334 / TIGR4) protein is Exonuclease/helicase subunit RexB.